Reading from the N-terminus, the 341-residue chain is Glucokinase (341 aa).

18–23 (GDIGGT) provides a ligand contact to ATP.

The protein belongs to the bacterial glucokinase family.

It is found in the cytoplasm. The enzyme catalyses D-glucose + ATP = D-glucose 6-phosphate + ADP + H(+). This is Glucokinase from Rhizobium johnstonii (strain DSM 114642 / LMG 32736 / 3841) (Rhizobium leguminosarum bv. viciae).